Here is a 172-residue protein sequence, read N- to C-terminus: Disulfide bond formation protein B (172 aa).

The Cytoplasmic segment spans residues 1-13; it reads MIIRLAGMSVRQG. Residues 14–30 form a helical membrane-spanning segment; sequence CLLGLLMCALMMGVALV. The Periplasmic portion of the chain corresponds to 31-48; it reads LQYVYGLTPCPLCIGQRI. The cysteines at positions 40 and 43 are disulfide-linked. The helical transmembrane segment at 49-65 threads the bilayer; sequence AVLLAAFVFAIGALHNP. Residues 66 to 72 lie on the Cytoplasmic side of the membrane; that stretch reads AGNLGRG. The helical transmembrane segment at 73 to 90 threads the bilayer; the sequence is LYAGLAALASVLGLAVAA. At 91-147 the chain is on the periplasmic side; sequence RHVWLQSLPPENVPSCGPGLDYMMEVLPLWDVLSRVLAGSGECAEIHGSLLGMSIPQ. A disulfide bridge links C106 with C133. The helical transmembrane segment at 148-166 threads the bilayer; it reads WTLLGFAVLLLIPLGMLAG. Residues 167–172 are Cytoplasmic-facing; it reads IVIRRR.

The protein belongs to the DsbB family.

The protein localises to the cell inner membrane. Functionally, required for disulfide bond formation in some periplasmic proteins. Acts by oxidizing the DsbA protein. The protein is Disulfide bond formation protein B of Chromohalobacter salexigens (strain ATCC BAA-138 / DSM 3043 / CIP 106854 / NCIMB 13768 / 1H11).